The following is a 301-amino-acid chain: MGIRPPPGERSPAAVLSFGVVNLDKPPGPSAHQVSAWIRDLVGVEKAAHAGTLDPKVTGCLPVLTGTATRIAPALLEGFKEYVAVLELHDDPPRILPDVIEAFTGEIYQKPPKKSAVARRLRTRTVYDLDVLDVDGRQVLLRIRCESGTYIRKLCHDIGRALGTNAHMGHLRRSATTPFDDTDLVTLHDLADAVAWLRDTDDTEPPDAPADALRAAVQPAERALTHLPRLTIADSAAHEVATGAPVYAPGVIDTTALPTPPADGALVACYTAGGTAVCLGRLVGDPDADAGVVVALERVLV.

Asp-54 serves as the catalytic Nucleophile. Residues 227–301 enclose the PUA domain; sequence LPRLTIADSA…VVVALERVLV (75 aa).

This sequence belongs to the pseudouridine synthase TruB family. Type 2 subfamily.

It carries out the reaction uridine(55) in tRNA = pseudouridine(55) in tRNA. Functionally, could be responsible for synthesis of pseudouridine from uracil-55 in the psi GC loop of transfer RNAs. The polypeptide is Probable tRNA pseudouridine synthase B (Halobacterium salinarum (strain ATCC 29341 / DSM 671 / R1)).